Reading from the N-terminus, the 312-residue chain is DNA-directed RNA polymerase subunit alpha (312 aa).

The segment at 1–226 (MIEFEKPIIT…EHLNLFTDLT (226 aa)) is alpha N-terminal domain (alpha-NTD). Residues 243-312 (DEKVLDRTIE…DLGLGLKNDK (70 aa)) are alpha C-terminal domain (alpha-CTD).

The protein belongs to the RNA polymerase alpha chain family. Homodimer. The RNAP catalytic core consists of 2 alpha, 1 beta, 1 beta' and 1 omega subunit. When a sigma factor is associated with the core the holoenzyme is formed, which can initiate transcription.

The catalysed reaction is RNA(n) + a ribonucleoside 5'-triphosphate = RNA(n+1) + diphosphate. Its function is as follows. DNA-dependent RNA polymerase catalyzes the transcription of DNA into RNA using the four ribonucleoside triphosphates as substrates. This Streptococcus pyogenes serotype M3 (strain ATCC BAA-595 / MGAS315) protein is DNA-directed RNA polymerase subunit alpha.